The chain runs to 663 residues: MIDRKDTNRFKLVSKYSPSGDQPQAIETLVDNIEGGEKAQILKGATGTGKTYTMSQVIAQVNKPTLVIAHNKTLAGQLYGEFKEFFPDNAVEYFVSYYDYYQPEAYVPSSDTYIEKDSSVNDEIDKLRHSATSSLLERNDVIVVASVSCIYGLGSPKEYADSVVSLRPGQEISRDQLLNNLVDIQFERNDIDFQRGKFRVRGDVVEVFPASRDEHAFRIEFFGDEIDRIREIESLTGRVLGEVEHLAIFPATHFMTNDEHMEEAISKIQAEMENQVELFEKEGKLIEAQRIRQRTEYDIEMLREMGYTNGVENYSRHMDGRSEGEPPFTLLDFFPEDFLIMIDESHMTMGQIKGMYNGDRSRKEMLVNYGFRLPSALDNRPLRREEFESHVHQIVYVSATPGDYEMGQTDTVVEQIIRPTGLLDPEVEVRPSMGQMDDLLGEINLRTEKGERTFITTLTKRMAEDLTDYLKEMGVKVKYMHSDIKTLERTEIIRDLRLGVFDVLIGINLLREGIDVPEVSLVAILDADKEGFLRNERGLIQTIGRAARNSNGHVIMYADKITDSMQRAMDETARRRRLQMDYNEKHGIVPQTIKKEIRDLIAITKSNDSDKPEKVVDYSSLSKKERQAEIKALQKQMQEAAELLDFELAAQIRDVILKLKAID.

One can recognise a Helicase ATP-binding domain in the interval 31–418; that stretch reads DNIEGGEKAQ…TDTVVEQIIR (388 aa). Residue 44–51 participates in ATP binding; sequence GATGTGKT. The short motif at 97–120 is the Beta-hairpin element; that stretch reads YYDYYQPEAYVPSSDTYIEKDSSV. The 167-residue stretch at 435–601 folds into the Helicase C-terminal domain; that stretch reads QMDDLLGEIN…TIKKEIRDLI (167 aa). The UVR domain occupies 627–662; that stretch reads QAEIKALQKQMQEAAELLDFELAAQIRDVILKLKAI.

This sequence belongs to the UvrB family. In terms of assembly, forms a heterotetramer with UvrA during the search for lesions. Interacts with UvrC in an incision complex.

The protein localises to the cytoplasm. In terms of biological role, the UvrABC repair system catalyzes the recognition and processing of DNA lesions. A damage recognition complex composed of 2 UvrA and 2 UvrB subunits scans DNA for abnormalities. Upon binding of the UvrA(2)B(2) complex to a putative damaged site, the DNA wraps around one UvrB monomer. DNA wrap is dependent on ATP binding by UvrB and probably causes local melting of the DNA helix, facilitating insertion of UvrB beta-hairpin between the DNA strands. Then UvrB probes one DNA strand for the presence of a lesion. If a lesion is found the UvrA subunits dissociate and the UvrB-DNA preincision complex is formed. This complex is subsequently bound by UvrC and the second UvrB is released. If no lesion is found, the DNA wraps around the other UvrB subunit that will check the other stand for damage. The polypeptide is UvrABC system protein B (Streptococcus agalactiae serotype Ia (strain ATCC 27591 / A909 / CDC SS700)).